The chain runs to 154 residues: Putative esterase AF_2264 (154 aa).

Belongs to the thioesterase PaaI family.

The chain is Putative esterase AF_2264 from Archaeoglobus fulgidus (strain ATCC 49558 / DSM 4304 / JCM 9628 / NBRC 100126 / VC-16).